A 166-amino-acid polypeptide reads, in one-letter code: 3-hydroxyacyl-[acyl-carrier-protein] dehydratase, mitochondrial (166 aa).

The N-terminal 17 residues, 1–17 (MLAKTVFPRGLLVLRSF), are a transit peptide targeting the mitochondrion. Residues 34–125 (ETRVFSSEDI…VQAIALRETK (92 aa)) form the MaoC-like domain.

As to quaternary structure, homodimer. Expressed in leaves, roots, siliques and flowers.

It is found in the mitochondrion. The enzyme catalyses a (3R)-hydroxyacyl-[ACP] = a (2E)-enoyl-[ACP] + H2O. The catalysed reaction is (3R)-hydroxyhexadecanoyl-[ACP] = (2E)-hexadecenoyl-[ACP] + H2O. It catalyses the reaction (3R)-hydroxydecanoyl-[ACP] = (2E)-decenoyl-[ACP] + H2O. Its pathway is lipid metabolism; fatty acid biosynthesis. 3-hydroxyl-[acyl-carrier-protein] (3-hydroxyl-ACP) dehydratase required for mitochondrial fatty acid synthesis (mtFAS). MtFAS are essential for photorespiration and plant development, probably by influencing mitochondrial membrane lipid composition and other lipid metabolic pathways. This is 3-hydroxyacyl-[acyl-carrier-protein] dehydratase, mitochondrial from Arabidopsis thaliana (Mouse-ear cress).